A 399-amino-acid polypeptide reads, in one-letter code: 1-deoxy-D-xylulose 5-phosphate reductoisomerase (399 aa).

NADPH is bound by residues Thr-13, Gly-14, Ser-15, Ile-16, and Asn-127. Position 128 (Lys-128) interacts with 1-deoxy-D-xylulose 5-phosphate. Position 129 (Glu-129) interacts with NADPH. Asp-153 is a binding site for Mn(2+). 1-deoxy-D-xylulose 5-phosphate-binding residues include Ser-154, Glu-155, Ser-187, and His-210. Position 155 (Glu-155) interacts with Mn(2+). An NADPH-binding site is contributed by Gly-216. Residues Ser-223, Asn-228, Lys-229, and Glu-232 each contribute to the 1-deoxy-D-xylulose 5-phosphate site. Glu-232 is a binding site for Mn(2+).

The protein belongs to the DXR family. It depends on Mg(2+) as a cofactor. Mn(2+) serves as cofactor.

The enzyme catalyses 2-C-methyl-D-erythritol 4-phosphate + NADP(+) = 1-deoxy-D-xylulose 5-phosphate + NADPH + H(+). It functions in the pathway isoprenoid biosynthesis; isopentenyl diphosphate biosynthesis via DXP pathway; isopentenyl diphosphate from 1-deoxy-D-xylulose 5-phosphate: step 1/6. Functionally, catalyzes the NADPH-dependent rearrangement and reduction of 1-deoxy-D-xylulose-5-phosphate (DXP) to 2-C-methyl-D-erythritol 4-phosphate (MEP). The protein is 1-deoxy-D-xylulose 5-phosphate reductoisomerase of Bordetella avium (strain 197N).